Reading from the N-terminus, the 72-residue chain is Protein kish-A (72 aa).

Residues 1 to 26 form the signal peptide; that stretch reads MSAIFNFQSLLIVILLLICTCAYLRS. Residues 27–53 lie on the Extracellular side of the membrane; the sequence is LVPNLLDKNKTGVLGIFWKCARIGERK. N35 carries an N-linked (GlcNAc...) asparagine glycan. Residues 54 to 71 traverse the membrane as a helical segment; the sequence is SPYVAVCCVVMAFSILFM. Q72 is a topological domain (cytoplasmic).

The protein belongs to the KISH family.

It localises to the golgi apparatus membrane. Functionally, involved in the early part of the secretory pathway. The chain is Protein kish-A (tmem167a) from Xenopus laevis (African clawed frog).